The following is a 557-amino-acid chain: Transcription factor fil1 (557 aa).

Residues 234–258 are disordered; the sequence is SPVKRELNDSTSPSKLSESSSSLTG. A compositionally biased stretch (low complexity) spans 243-258; sequence STSPSKLSESSSSLTG. 2 GATA-type zinc fingers span residues 365–390 and 419–443; these read CFNC…CNAC and CANC…CNAC.

The protein localises to the nucleus. It localises to the cytoplasm. Activates genes required for amino acid biosynthesis and acts as a master transcriptional regulator during amino acid starvation. Binds variations of the DNA sequence 5'-GAT[AC]GC-3'. The polypeptide is Transcription factor fil1 (Schizosaccharomyces pombe (strain 972 / ATCC 24843) (Fission yeast)).